The sequence spans 270 residues: Large ribosomal subunit protein uL30 (270 aa).

Residue Met-1 is modified to N-acetylmethionine. Repeat copies occupy residues Lys-7–Leu-18, Lys-19–Leu-29, Lys-30–Leu-40, Lys-41–Val-52, Lys-53–Leu-64, and Arg-65–Ala-76. The segment at Lys-7–Ala-76 is 6 X 12 AA tandem repeats. The residue at position 39 (Thr-39) is a Phosphothreonine. Lys-146 is subject to N6-acetyllysine. Lys-149 carries the post-translational modification N6-succinyllysine. Phosphotyrosine is present on Tyr-161.

The protein belongs to the universal ribosomal protein uL30 family. As to quaternary structure, component of the large ribosomal subunit. Homodimer. Interacts with DHX33.

The protein localises to the cytoplasm. Its function is as follows. Component of the large ribosomal subunit. The ribosome is a large ribonucleoprotein complex responsible for the synthesis of proteins in the cell. Binds to G-rich structures in 28S rRNA and in mRNAs. Plays a regulatory role in the translation apparatus; inhibits cell-free translation of mRNAs. The protein is Large ribosomal subunit protein uL30 (Rpl7) of Mus musculus (Mouse).